The chain runs to 72 residues: Translation initiation factor IF-1 (72 aa).

One can recognise an S1-like domain in the interval 1–72 (MAKEDTIQMQ…TRARIVFRAR (72 aa)).

The protein belongs to the IF-1 family. As to quaternary structure, component of the 30S ribosomal translation pre-initiation complex which assembles on the 30S ribosome in the order IF-2 and IF-3, IF-1 and N-formylmethionyl-tRNA(fMet); mRNA recruitment can occur at any time during PIC assembly.

It localises to the cytoplasm. In terms of biological role, one of the essential components for the initiation of protein synthesis. Stabilizes the binding of IF-2 and IF-3 on the 30S subunit to which N-formylmethionyl-tRNA(fMet) subsequently binds. Helps modulate mRNA selection, yielding the 30S pre-initiation complex (PIC). Upon addition of the 50S ribosomal subunit IF-1, IF-2 and IF-3 are released leaving the mature 70S translation initiation complex. The sequence is that of Translation initiation factor IF-1 from Neisseria gonorrhoeae (strain ATCC 700825 / FA 1090).